Here is a 466-residue protein sequence, read N- to C-terminus: Ribulose bisphosphate carboxylase large chain (466 aa).

At K4 the chain carries N6,N6,N6-trimethyllysine. Residues N113 and T163 each coordinate substrate. The active-site Proton acceptor is K165. A substrate-binding site is contributed by K167. Mg(2+)-binding residues include K191, D193, and E194. K191 is modified (N6-carboxylysine). Residue H284 is the Proton acceptor of the active site. Positions 285, 317, and 369 each coordinate substrate.

The protein belongs to the RuBisCO large chain family. Type I subfamily. As to quaternary structure, heterohexadecamer of 8 large chains and 8 small chains; disulfide-linked. The disulfide link is formed within the large subunit homodimers. Mg(2+) serves as cofactor. The disulfide bond which can form in the large chain dimeric partners within the hexadecamer appears to be associated with oxidative stress and protein turnover.

The protein resides in the plastid. It localises to the chloroplast. The enzyme catalyses 2 (2R)-3-phosphoglycerate + 2 H(+) = D-ribulose 1,5-bisphosphate + CO2 + H2O. The catalysed reaction is D-ribulose 1,5-bisphosphate + O2 = 2-phosphoglycolate + (2R)-3-phosphoglycerate + 2 H(+). RuBisCO catalyzes two reactions: the carboxylation of D-ribulose 1,5-bisphosphate, the primary event in carbon dioxide fixation, as well as the oxidative fragmentation of the pentose substrate in the photorespiration process. Both reactions occur simultaneously and in competition at the same active site. The protein is Ribulose bisphosphate carboxylase large chain of Aphelandra sinclairiana (Orange shrimp plant).